Here is a 181-residue protein sequence, read N- to C-terminus: Peptidyl-tRNA hydrolase (181 aa).

Residue Tyr14 participates in tRNA binding. His19 acts as the Proton acceptor in catalysis. The tRNA site is built by Phe60, Asn62, and Asn106.

This sequence belongs to the PTH family. Monomer.

Its subcellular location is the cytoplasm. It carries out the reaction an N-acyl-L-alpha-aminoacyl-tRNA + H2O = an N-acyl-L-amino acid + a tRNA + H(+). Its function is as follows. Hydrolyzes ribosome-free peptidyl-tRNAs (with 1 or more amino acids incorporated), which drop off the ribosome during protein synthesis, or as a result of ribosome stalling. Functionally, catalyzes the release of premature peptidyl moieties from peptidyl-tRNA molecules trapped in stalled 50S ribosomal subunits, and thus maintains levels of free tRNAs and 50S ribosomes. The chain is Peptidyl-tRNA hydrolase from Campylobacter curvus (strain 525.92).